Reading from the N-terminus, the 435-residue chain is Protein deadpan (435 aa).

Residues 18–27 (GYSDSYGSNG) are compositionally biased toward low complexity. The tract at residues 18–48 (GYSDSYGSNGRMSNPNGLSKAELRKTNKPIM) is disordered. One can recognise a bHLH domain in the interval 40 to 97 (LRKTNKPIMEKRRRARINHCLNELKSLILEAMKKDPARHTKLEKADILEMTVKHLQSV). In terms of domain architecture, Orange spans 116 to 149 (FKTGFVECAEEVNRYVSQMDGIDTGVRQRLSAHL). Disordered stretches follow at residues 305–334 (QLPV…AASP) and 349–416 (STPP…DEPS). A compositionally biased stretch (low complexity) spans 311 to 324 (STSPPLSPISSISS). 2 stretches are compositionally biased toward polar residues: residues 355 to 378 (SAET…SSGC) and 385 to 395 (LQQQQVSSTSG). 3 positions are modified to phosphoserine: Ser407, Ser408, and Ser411. A WRPW motif motif is present at residues 432–435 (WRPW).

Homodimer. Heterodimer with E(spl)mgamma-HLH and E(spl). Transcription repression requires formation of a complex with the corepressor protein Groucho. Interacts (via bHLH motif) with sisA. Interacts with da.

Its subcellular location is the nucleus. Transcriptional repressor of genes that require a bHLH protein for their transcription. In the larval brain, required to maintain the self-renewal and identity of type II neuroblasts by regulating the expression of the transcriptional repressor erm together with other self-renewal transcriptional repressors such as klu and E(spl)mgamma-HLH. As part of its role in neuroblasts development, has been shown to be a direct target of the Notch signaling pathway, however might work also independently of N/Notch. In the developing larval and pupal brain, required for mushroom body differentiation. Involved in sex determination and SXL transcription repression when in complex with the corepressor protein Groucho. The protein is Protein deadpan (dpn) of Drosophila melanogaster (Fruit fly).